The following is a 506-amino-acid chain: PHD finger protein 10 (506 aa).

Disordered stretches follow at residues 1-66 (MAAV…QDFG) and 293-377 (DPEL…SVSG). Over residues 23–35 (VKEDNSNDTKDPE) the composition is skewed to basic and acidic residues. Positions 52–66 (GDSTPSCENSNQDFG) are enriched in polar residues. An SAY region spans residues 90 to 299 (MLQEQVSEYL…DPLDPELLAL (210 aa)). A compositionally biased stretch (low complexity) spans 326 to 338 (SIDSSSMNMSESD). Residues 353–367 (KVKEKSSTPRKEGSK) show a composition bias toward basic and acidic residues. A PHD-type 1; degenerate zinc finger spans residues 387 to 444 (ICGICLKGKDANKKGRSERLIHCSQCDNSGHPSCLDMSAELVAVIKKYPWQCMECKTC). A PHD-type 2; degenerate zinc finger spans residues 446-489 (ICGQPHHEEEMMFCDTCDRGYHTFCVGLGALPSGRWICDCCQKV).

Belongs to the SAYP family. Component of neural progenitors-specific chromatin remodeling complex (npBAF complex), a subfamily of ATP-dependent SWI/SNF chromatin remodeling complexes.

The protein localises to the nucleus. Involved in transcription activity regulation by chromatin remodeling in the context of the neural progenitors-specific chromatin remodeling complex (npBAF complex). May play a role in the proliferation of neural progenitors. This chain is PHD finger protein 10 (phf10), found in Xenopus laevis (African clawed frog).